We begin with the raw amino-acid sequence, 87 residues long: UPF0250 protein plu1293 (87 aa).

It belongs to the UPF0250 family.

The polypeptide is UPF0250 protein plu1293 (Photorhabdus laumondii subsp. laumondii (strain DSM 15139 / CIP 105565 / TT01) (Photorhabdus luminescens subsp. laumondii)).